Reading from the N-terminus, the 156-residue chain is Probable cyclic pyranopterin monophosphate synthase (156 aa).

Residues 74–76 (MCH) and 110–111 (ME) each bind substrate. D125 is a catalytic residue.

The protein belongs to the MoaC family. In terms of assembly, homohexamer; trimer of dimers.

The enzyme catalyses (8S)-3',8-cyclo-7,8-dihydroguanosine 5'-triphosphate = cyclic pyranopterin phosphate + diphosphate. It participates in cofactor biosynthesis; molybdopterin biosynthesis. In terms of biological role, catalyzes the conversion of (8S)-3',8-cyclo-7,8-dihydroguanosine 5'-triphosphate to cyclic pyranopterin monophosphate (cPMP). The sequence is that of Probable cyclic pyranopterin monophosphate synthase from Methanospirillum hungatei JF-1 (strain ATCC 27890 / DSM 864 / NBRC 100397 / JF-1).